The following is a 334-amino-acid chain: L-lactate dehydrogenase B chain (334 aa).

N-acetylalanine is present on Ala-2. N6-acetyllysine is present on Lys-7. Residues 30–58 (GQVGMACAISILGKSLTDELALVDVLEDK) and Arg-100 each bind NAD(+). The residue at position 44 (Ser-44) is a Phosphoserine. N6-acetyllysine is present on Lys-58. Position 107 (Arg-107) interacts with substrate. Lys-119 carries the post-translational modification N6-acetyllysine. Asn-139 serves as a coordination point for NAD(+). Asn-139 and Arg-170 together coordinate substrate. The active-site Proton acceptor is His-194. Phosphotyrosine is present on Tyr-240. Thr-249 contributes to the substrate binding site. Lys-329 is modified (N6-acetyllysine).

It belongs to the LDH/MDH superfamily. LDH family. Homotetramer. Interacts with PTEN upstream reading frame protein MP31; the interaction leads to inhibition of mitochondrial lactate dehydrogenase activity, preventing conversion of lactate to pyruvate in mitochondria.

The protein localises to the cytoplasm. It localises to the mitochondrion inner membrane. The catalysed reaction is (S)-lactate + NAD(+) = pyruvate + NADH + H(+). It functions in the pathway fermentation; pyruvate fermentation to lactate; (S)-lactate from pyruvate: step 1/1. Functionally, interconverts simultaneously and stereospecifically pyruvate and lactate with concomitant interconversion of NADH and NAD(+). The polypeptide is L-lactate dehydrogenase B chain (LDHB) (Sus scrofa (Pig)).